We begin with the raw amino-acid sequence, 192 residues long: uncharacterized protein (192 aa).

The Nudix hydrolase domain occupies 29 to 160 (QRQAAVLIPV…PLDVYRRGNS (132 aa)). Residues 67 to 89 (GAVDSTDASLIAAALREAQEEVA) carry the Nudix box motif. Glu83 and Glu87 together coordinate Mg(2+).

The protein belongs to the Nudix hydrolase family. PCD1 subfamily. Mn(2+) is required as a cofactor. It depends on Mg(2+) as a cofactor.

Probably mediates the hydrolysis of some nucleoside diphosphate derivatives. This is an uncharacterized protein from Salmonella dublin (strain CT_02021853).